A 246-amino-acid chain; its full sequence is Probable transcriptional regulatory protein CGSHiEE_01480 (246 aa).

Belongs to the TACO1 family.

It localises to the cytoplasm. This Haemophilus influenzae (strain PittEE) protein is Probable transcriptional regulatory protein CGSHiEE_01480.